Here is a 183-residue protein sequence, read N- to C-terminus: Photosystem I assembly protein Ycf4 (183 aa).

Transmembrane regions (helical) follow at residues 23 to 43 (WASVVFLGAIGFLFTGLSSYF) and 64 to 84 (VMSFYGILGLLLSIYLWLTII).

It belongs to the Ycf4 family.

The protein resides in the plastid. The protein localises to the chloroplast thylakoid membrane. Its function is as follows. Seems to be required for the assembly of the photosystem I complex. The protein is Photosystem I assembly protein Ycf4 of Stigeoclonium helveticum (Green alga).